A 131-amino-acid polypeptide reads, in one-letter code: Probable ATP synthase subunit g 1, mitochondrial (131 aa).

The protein belongs to the ATPase g subunit family. As to quaternary structure, subunit of the F-type ATPase which has 2 components, CF(1) - the catalytic core - and CF(0) - the membrane proton channel.

It localises to the mitochondrion membrane. Its function is as follows. Mitochondrial membrane ATP synthase (F(1)F(0) ATP synthase or Complex V) produces ATP from ADP in the presence of a proton gradient across the membrane which is generated by electron transport complexes of the respiratory chain. F-type ATPases consist of two structural domains, F(1) - containing the extramembraneous catalytic core, and F(0) - containing the membrane proton channel, linked together by a central stalk and a peripheral stalk. During catalysis, ATP synthesis in the catalytic domain of F(1) is coupled via a rotary mechanism of the central stalk subunits to proton translocation. Part of the complex F(0) domain. Minor subunit located with subunit a in the membrane. This Caenorhabditis elegans protein is Probable ATP synthase subunit g 1, mitochondrial.